A 277-amino-acid polypeptide reads, in one-letter code: S-formylglutathione hydrolase FrmB (277 aa).

Active-site charge relay system residues include S145, D221, and H254.

The protein belongs to the esterase D family.

It carries out the reaction S-formylglutathione + H2O = formate + glutathione + H(+). Its function is as follows. Serine hydrolase involved in the detoxification of formaldehyde. Hydrolyzes S-formylglutathione to glutathione and formate. The chain is S-formylglutathione hydrolase FrmB (frmB) from Escherichia coli O139:H28 (strain E24377A / ETEC).